The primary structure comprises 410 residues: Tyrosine--tRNA ligase (410 aa).

Y36 is an L-tyrosine binding site. The 'HIGH' region motif lies at 41–50 (ATADSLTAGH). L-tyrosine is bound by residues Y169 and Q173. The 'KMSKS' region signature appears at 229–233 (KMGKT). Residue K232 participates in ATP binding. The region spanning 343–409 (IDLITMMIDA…GKKAYHLFRA (67 aa)) is the S4 RNA-binding domain.

It belongs to the class-I aminoacyl-tRNA synthetase family. TyrS type 1 subfamily. Homodimer.

It is found in the cytoplasm. The enzyme catalyses tRNA(Tyr) + L-tyrosine + ATP = L-tyrosyl-tRNA(Tyr) + AMP + diphosphate + H(+). Catalyzes the attachment of tyrosine to tRNA(Tyr) in a two-step reaction: tyrosine is first activated by ATP to form Tyr-AMP and then transferred to the acceptor end of tRNA(Tyr). This chain is Tyrosine--tRNA ligase, found in Lachnoclostridium phytofermentans (strain ATCC 700394 / DSM 18823 / ISDg) (Clostridium phytofermentans).